The primary structure comprises 240 residues: Dihydromonapterin reductase (240 aa).

Catalysis depends on tyrosine 152, which acts as the Proton acceptor.

This sequence belongs to the short-chain dehydrogenases/reductases (SDR) family. FolM subfamily.

It catalyses the reaction (6S)-5,6,7,8-tetrahydrofolate + NADP(+) = 7,8-dihydrofolate + NADPH + H(+). The enzyme catalyses 7,8-dihydromonapterin + NADPH + H(+) = 5,6,7,8-tetrahydromonapterin + NADP(+). Catalyzes the reduction of dihydromonapterin to tetrahydromonapterin. Also has lower activity with dihydrofolate. This is Dihydromonapterin reductase (folM) from Escherichia coli O1:K1 / APEC.